Here is a 476-residue protein sequence, read N- to C-terminus: MVNLLSEKTSGTNVAEFTVSEIAGALKRVVEEKFGYVRVRGEISGYRGAHASGHAYFALKDDKARLEAVIWRGVMEKLKFPPEEGMEVVAVGKLTTYPGSSKYQIVIEALEPTGVGALMTLLENRKKKFAEEGLFDEAKKKPLPYMPRIIGVVTSPTGAVIRDIIHRISDRFPLHVLVWPVRVQGETSGSEVAAAVEGFNALASEGHIPKPDLIIVARGGGSLEDLWGFNDEAVVRAVYASDLPIISAVGHETDWTLIDYVADWRAPTPTGAAEKAVPVKLDLEVCVASLGARLRKGLARSFDFHQQKLCAARRGLPSADQLFSLPRRGFDEISSRLQRALCVSYDKKRFSFHALHLRLSPRLLKSEKAQRHTKEYTARLYRAFMRSVEKKRSALELACRLLKSTSYQNILERGFVLVLGQNHKPIKRLAQFPESGQINLRFFDGDIHVATQEPFSAARSKHKKIKSPSDDQGTLF.

Belongs to the XseA family. As to quaternary structure, heterooligomer composed of large and small subunits.

The protein localises to the cytoplasm. The catalysed reaction is Exonucleolytic cleavage in either 5'- to 3'- or 3'- to 5'-direction to yield nucleoside 5'-phosphates.. Its function is as follows. Bidirectionally degrades single-stranded DNA into large acid-insoluble oligonucleotides, which are then degraded further into small acid-soluble oligonucleotides. In Bartonella tribocorum (strain CIP 105476 / IBS 506), this protein is Exodeoxyribonuclease 7 large subunit.